The sequence spans 99 residues: METNSHFFYVLLCNDNSLYAGYTNDLQKRLKTHNEGKGAKYTRARRPVSLCHAESFETKREAMQAEYRFKQLTRKKKEQYIEEKRRSKEAVYVKTPDEF.

The GIY-YIG domain occupies 4 to 79 (NSHFFYVLLC…KQLTRKKKEQ (76 aa)).

It belongs to the UPF0213 family.

This is UPF0213 protein RBAM_000440 from Bacillus velezensis (strain DSM 23117 / BGSC 10A6 / LMG 26770 / FZB42) (Bacillus amyloliquefaciens subsp. plantarum).